We begin with the raw amino-acid sequence, 504 residues long: Maturase K (504 aa).

The protein belongs to the intron maturase 2 family. MatK subfamily.

The protein localises to the plastid. The protein resides in the chloroplast. Functionally, usually encoded in the trnK tRNA gene intron. Probably assists in splicing its own and other chloroplast group II introns. This Arabidopsis lyrata (Lyre-leaved rock-cress) protein is Maturase K.